Consider the following 240-residue polypeptide: UDP-2,3-diacylglucosamine hydrolase (240 aa).

The Mn(2+) site is built by D8, H10, D41, N79, and H114. 79 to 80 is a substrate binding site; sequence NR. D122, S160, N164, K167, and H195 together coordinate substrate. Mn(2+)-binding residues include H195 and H197.

This sequence belongs to the LpxH family. Mn(2+) is required as a cofactor.

It localises to the cell inner membrane. It carries out the reaction UDP-2-N,3-O-bis[(3R)-3-hydroxytetradecanoyl]-alpha-D-glucosamine + H2O = 2-N,3-O-bis[(3R)-3-hydroxytetradecanoyl]-alpha-D-glucosaminyl 1-phosphate + UMP + 2 H(+). Its pathway is glycolipid biosynthesis; lipid IV(A) biosynthesis; lipid IV(A) from (3R)-3-hydroxytetradecanoyl-[acyl-carrier-protein] and UDP-N-acetyl-alpha-D-glucosamine: step 4/6. In terms of biological role, hydrolyzes the pyrophosphate bond of UDP-2,3-diacylglucosamine to yield 2,3-diacylglucosamine 1-phosphate (lipid X) and UMP by catalyzing the attack of water at the alpha-P atom. Involved in the biosynthesis of lipid A, a phosphorylated glycolipid that anchors the lipopolysaccharide to the outer membrane of the cell. This chain is UDP-2,3-diacylglucosamine hydrolase, found in Escherichia coli O81 (strain ED1a).